A 500-amino-acid polypeptide reads, in one-letter code: Probable cytosol aminopeptidase (500 aa).

Mn(2+) is bound by residues lysine 264 and aspartate 269. Lysine 276 is an active-site residue. 3 residues coordinate Mn(2+): aspartate 287, aspartate 346, and glutamate 348. Residue arginine 350 is part of the active site.

Belongs to the peptidase M17 family. Requires Mn(2+) as cofactor.

The protein resides in the cytoplasm. It carries out the reaction Release of an N-terminal amino acid, Xaa-|-Yaa-, in which Xaa is preferably Leu, but may be other amino acids including Pro although not Arg or Lys, and Yaa may be Pro. Amino acid amides and methyl esters are also readily hydrolyzed, but rates on arylamides are exceedingly low.. It catalyses the reaction Release of an N-terminal amino acid, preferentially leucine, but not glutamic or aspartic acids.. Its function is as follows. Presumably involved in the processing and regular turnover of intracellular proteins. Catalyzes the removal of unsubstituted N-terminal amino acids from various peptides. This is Probable cytosol aminopeptidase from Nitrobacter hamburgensis (strain DSM 10229 / NCIMB 13809 / X14).